Consider the following 226-residue polypeptide: Pro-opiomelanocortin (226 aa).

An N-terminal signal peptide occupies residues 1 to 22; it reads MVCAPWLLAVVVVCVCNPGVGG. The propeptide occupies 23-97; it reads QCWDSSHCKD…DPEPHSDKRH (75 aa). At serine 98 the chain carries N-acetylserine; in Corticotropin. At tyrosine 198 the chain carries N-acetyltyrosine; in Beta-endorphin and Met-enkephalin.

This sequence belongs to the POMC family. Post-translationally, specific enzymatic cleavages at paired basic residues yield the different active peptides.

It is found in the secreted. Stimulates the adrenal glands to release cortisol. Its function is as follows. Anorexigenic peptide. Increases the pigmentation of skin by increasing melanin production in melanocytes. In terms of biological role, increases the pigmentation of skin by increasing melanin production in melanocytes. Functionally, endogenous orexigenic opiate. Endogenous opiate. In Oncorhynchus keta (Chum salmon), this protein is Pro-opiomelanocortin (pomc).